The primary structure comprises 381 residues: MDEDINKDTNNNNNTTDSNNNNNNINEDEIIFNNYINNYSNYLNNNGISALDLLIQGRDGNNNIITFCSEIDQMLNGGTPLKKITEICGVPGIGKTNMAFQLLVNTSIPFDLGGVQGKAIYIDTEGSYSCQRVREMATHLVNHLECVLLKNPMTQTTYIPTVETVLNSIYYYRVYHYIEIISLIHQLPLFLEKNKDVKLIVVDSITYPFRCDFKDMGLRTRSLLSLAQNLMNIATRYNLAVVVMNQVTTKISPNQKESILVPYLGESWTHICTYRMVLFWKQKQRFCHLYKSPSFKSCFTPFDIVEYGIRDVGFNHPPPLNPEDQEQEKEKEKRKKKNNNNNNNNNNNNNNNNNNNNNNNNNNNNNNNNKNNDENEMYIEN.

Positions 1-24 are disordered; it reads MDEDINKDTNNNNNTTDSNNNNNN. Over residues 8 to 24 the composition is skewed to low complexity; sequence DTNNNNNTTDSNNNNNN. Residue 89-96 participates in ATP binding; sequence GVPGIGKT. Residues 313 to 381 form a disordered region; the sequence is GFNHPPPLNP…NDENEMYIEN (69 aa). Residues 323–377 are a coiled coil; that stretch reads EDQEQEKEKEKRKKKNNNNNNNNNNNNNNNNNNNNNNNNNNNNNNNNKNNDENEM. Low complexity predominate over residues 339 to 370; sequence NNNNNNNNNNNNNNNNNNNNNNNNNNNNNNNK.

It belongs to the RecA family. RAD51 subfamily.

Its subcellular location is the nucleus. Involved in the homologous recombination repair (HRR) pathway of double-stranded DNA breaks arising during DNA replication or induced by DNA-damaging agents. The chain is DNA repair protein RAD51 homolog 3 (rad51c) from Dictyostelium discoideum (Social amoeba).